Here is a 421-residue protein sequence, read N- to C-terminus: Tryptophan synthase beta chain (421 aa).

Lys-112 carries the post-translational modification N6-(pyridoxal phosphate)lysine.

This sequence belongs to the TrpB family. In terms of assembly, tetramer of two alpha and two beta chains. Pyridoxal 5'-phosphate is required as a cofactor.

The enzyme catalyses (1S,2R)-1-C-(indol-3-yl)glycerol 3-phosphate + L-serine = D-glyceraldehyde 3-phosphate + L-tryptophan + H2O. The protein operates within amino-acid biosynthesis; L-tryptophan biosynthesis; L-tryptophan from chorismate: step 5/5. Functionally, the beta subunit is responsible for the synthesis of L-tryptophan from indole and L-serine. The polypeptide is Tryptophan synthase beta chain (trpB) (Mycobacterium bovis (strain ATCC BAA-935 / AF2122/97)).